The sequence spans 692 residues: Elongation factor G (692 aa).

A tr-type G domain is found at 8 to 283; sequence EMTRNIGIMA…AVLDYMPAPT (276 aa). Residues 17-24, 81-85, and 135-138 each bind GTP; these read AHIDAGKT, DTPGH, and NKMD.

It belongs to the TRAFAC class translation factor GTPase superfamily. Classic translation factor GTPase family. EF-G/EF-2 subfamily.

The protein localises to the cytoplasm. Functionally, catalyzes the GTP-dependent ribosomal translocation step during translation elongation. During this step, the ribosome changes from the pre-translocational (PRE) to the post-translocational (POST) state as the newly formed A-site-bound peptidyl-tRNA and P-site-bound deacylated tRNA move to the P and E sites, respectively. Catalyzes the coordinated movement of the two tRNA molecules, the mRNA and conformational changes in the ribosome. The polypeptide is Elongation factor G (Citrifermentans bemidjiense (strain ATCC BAA-1014 / DSM 16622 / JCM 12645 / Bem) (Geobacter bemidjiensis)).